A 511-amino-acid polypeptide reads, in one-letter code: S-layer protein B (511 aa).

An N-terminal signal peptide occupies residues 1–24; that stretch reads MVKYMNLIVLGMLMFGVFVTLSLG. Residues 358 to 392 are a coiled coil; that stretch reads IQRLQSEVSVLESEVDQLKVEIQSLNETLTLQASE. Residues 487–507 form a helical membrane-spanning segment; that stretch reads GGIILGVIALIIAIVAVVLVF.

The protein belongs to the Sulfolobales SlaB family. In terms of assembly, the mushroom-shaped unit cells of the Sulfolobales' S-layers may consist of three SlaB subunits and six SlaA subunits.

The protein localises to the secreted. The protein resides in the cell wall. It localises to the S-layer. It is found in the cell membrane. Functionally, S-layer small protein. May anchor the complex to the cell membrane. The protein is S-layer protein B of Acidianus ambivalens (Desulfurolobus ambivalens).